A 368-amino-acid polypeptide reads, in one-letter code: Histidinol-phosphate aminotransferase (368 aa).

Residue lysine 224 is modified to N6-(pyridoxal phosphate)lysine.

It belongs to the class-II pyridoxal-phosphate-dependent aminotransferase family. Histidinol-phosphate aminotransferase subfamily. As to quaternary structure, homodimer. Requires pyridoxal 5'-phosphate as cofactor.

The catalysed reaction is L-histidinol phosphate + 2-oxoglutarate = 3-(imidazol-4-yl)-2-oxopropyl phosphate + L-glutamate. The protein operates within amino-acid biosynthesis; L-histidine biosynthesis; L-histidine from 5-phospho-alpha-D-ribose 1-diphosphate: step 7/9. The sequence is that of Histidinol-phosphate aminotransferase from Agrobacterium fabrum (strain C58 / ATCC 33970) (Agrobacterium tumefaciens (strain C58)).